A 102-amino-acid polypeptide reads, in one-letter code: NADH-quinone oxidoreductase subunit K (102 aa).

3 consecutive transmembrane segments (helical) span residues 6–26 (LEHGLAVAGILFCLGLVGLMV), 30–50 (ILFVLMSLEVMMNASALAFVV), and 62–82 (VMFILVISLAAAEASIGLAIL).

This sequence belongs to the complex I subunit 4L family. NDH-1 is composed of 13 different subunits. Subunits NuoA, H, J, K, L, M, N constitute the membrane sector of the complex.

It localises to the cell inner membrane. The catalysed reaction is a quinone + NADH + 5 H(+)(in) = a quinol + NAD(+) + 4 H(+)(out). In terms of biological role, NDH-1 shuttles electrons from NADH, via FMN and iron-sulfur (Fe-S) centers, to quinones in the respiratory chain. The immediate electron acceptor for the enzyme in this species is believed to be ubiquinone. Couples the redox reaction to proton translocation (for every two electrons transferred, four hydrogen ions are translocated across the cytoplasmic membrane), and thus conserves the redox energy in a proton gradient. The chain is NADH-quinone oxidoreductase subunit K from Pseudomonas putida (strain ATCC 700007 / DSM 6899 / JCM 31910 / BCRC 17059 / LMG 24140 / F1).